A 232-amino-acid chain; its full sequence is Probable proteasome subunit alpha type-5 (232 aa).

This sequence belongs to the peptidase T1A family. The 26S proteasome consists of a 20S proteasome core and two 19S regulatory subunits. The 20S proteasome core is composed of 28 subunits that are arranged in four stacked rings, resulting in a barrel-shaped structure. The two end rings are each formed by seven alpha subunits, and the two central rings are each formed by seven beta subunits. The catalytic chamber with the active sites is on the inside of the barrel.

Its subcellular location is the cytoplasm. It is found in the nucleus. In terms of biological role, the proteasome degrades poly-ubiquitinated proteins in the cytoplasm and in the nucleus. It is essential for the regulated turnover of proteins and for the removal of misfolded proteins. The proteasome is a multicatalytic proteinase complex that is characterized by its ability to cleave peptides with Arg, Phe, Tyr, Leu, and Glu adjacent to the leaving group at neutral or slightly basic pH. It has an ATP-dependent proteolytic activity. This chain is Probable proteasome subunit alpha type-5 (PUP2), found in Encephalitozoon cuniculi (strain GB-M1) (Microsporidian parasite).